A 119-amino-acid polypeptide reads, in one-letter code: Ribonuclease P protein component (119 aa).

Belongs to the RnpA family. Consists of a catalytic RNA component (M1 or rnpB) and a protein subunit.

The enzyme catalyses Endonucleolytic cleavage of RNA, removing 5'-extranucleotides from tRNA precursor.. RNaseP catalyzes the removal of the 5'-leader sequence from pre-tRNA to produce the mature 5'-terminus. It can also cleave other RNA substrates such as 4.5S RNA. The protein component plays an auxiliary but essential role in vivo by binding to the 5'-leader sequence and broadening the substrate specificity of the ribozyme. The sequence is that of Ribonuclease P protein component from Streptococcus pyogenes serotype M1.